The primary structure comprises 251 residues: Probable transcriptional regulatory protein cu0933 (251 aa).

Positions 56-79 (AKKSSVPNDNIERARKRGSGEEAG) are disordered.

Belongs to the TACO1 family.

It is found in the cytoplasm. In Corynebacterium urealyticum (strain ATCC 43042 / DSM 7109), this protein is Probable transcriptional regulatory protein cu0933.